The chain runs to 393 residues: S-adenosylmethionine synthase (393 aa).

ATP is bound at residue His16. Asp18 contacts Mg(2+). Glu44 is a K(+) binding site. Positions 57 and 100 each coordinate L-methionine. A flexible loop region spans residues 100–110; that stretch reads QSPDIVMGVDG. Residues 165–167, 231–232, Asp240, 246–247, and Lys267 contribute to the ATP site; these read DAK, RF, and RK. Asp240 serves as a coordination point for L-methionine. L-methionine is bound at residue Lys271.

The protein belongs to the AdoMet synthase family. Homotetramer; dimer of dimers. The cofactor is Mg(2+). It depends on K(+) as a cofactor.

It localises to the cytoplasm. The enzyme catalyses L-methionine + ATP + H2O = S-adenosyl-L-methionine + phosphate + diphosphate. It participates in amino-acid biosynthesis; S-adenosyl-L-methionine biosynthesis; S-adenosyl-L-methionine from L-methionine: step 1/1. Its function is as follows. Catalyzes the formation of S-adenosylmethionine (AdoMet) from methionine and ATP. The overall synthetic reaction is composed of two sequential steps, AdoMet formation and the subsequent tripolyphosphate hydrolysis which occurs prior to release of AdoMet from the enzyme. The chain is S-adenosylmethionine synthase from Coxiella burnetii (strain Dugway 5J108-111).